The primary structure comprises 677 residues: MTTSHMNGYVTESDGGGGTDIVEEGVQRHREMAVDCPSELGARTLPVRRSAQLEKIRQQQEDRRRREEEGRSRQELDLNSSMRLKKLSQNPKVGIDNPTFEQMEGPGGSAGGLQSLIAPPALLELEDLLMSLKQVQHSLNDSQSQEDVELVLQLVQKPDFQKAFSIHNSVAHYMNRPSPPYPLTDHAQTLAQEVEVMVQNSSHKEGLELSSLLSTSHMQALMMAHDSVAEQEMQLEPLVPSVNASETLTQWGGETVKIVRIEKAKDIPLGATVRNDMDSVVISRIVKGGAAERSGLLHEGDEILEINGVEIRGKDVNEVFDILADMHGVLSFVLIPSAQIKSPPIKETVVHVKAHFDYDPSDDPYVPCRELGLCFQKGDILHIISQDDPNWWQAYRDGDEDNQPLAGLVPGKSFQQQREAMKQTIEEDKEPEKTGKLWCAKKTKKKRKKMQYNANKNDDFDNEEILTYEEMALYHQPANRKRPIALIGPPNCGQNELRQRLLSTEPDRFAGPVPHTTRSRRDAEANGRDYHFVSRQAFEMDSAAGKFIESGEFEKNFYGTSTDSVRQVINTGKICLLCVHTQSLKVLRSSDLKPYIIFIAPPSQERLRALLAKDNKNPKPEELRDIIEKAREMEQNYGHLFDAAIVNTDLDKSYQELLRLINKLDTEPQWVPSSWLR.

The segment at 1–347 is required for the correct localization of PALS1 and PATJ at cell-cell contacts and the normal formation of tight junctions and adherens junctions; it reads MTTSHMNGYV…AQIKSPPIKE (347 aa). Positions 39-81 are disordered; that stretch reads ELGARTLPVRRSAQLEKIRQQQEDRRRREEEGRSRQELDLNSS. The span at 51–76 shows a compositional bias: basic and acidic residues; sequence AQLEKIRQQQEDRRRREEEGRSRQEL. L27 domains are found at residues 121-178 and 180-236; these read ALLE…NRPS and PYPL…MQLE. Positions 258–338 constitute a PDZ domain; it reads IVRIEKAKDI…VLSFVLIPSA (81 aa). The region spanning 347 to 419 is the SH3 domain; it reads ETVVHVKAHF…PGKSFQQQRE (73 aa). Residues 481-662 form the Guanylate kinase-like domain; that stretch reads KRPIALIGPP…SYQELLRLIN (182 aa). Residue 488 to 495 participates in ATP binding; the sequence is GPPNCGQN. Residues 506 to 526 are disordered; the sequence is PDRFAGPVPHTTRSRRDAEAN.

It belongs to the MAGUK family. As to expression, expressed in the retina and in the neural tube.

It is found in the apical cell membrane. The protein localises to the cell junction. The protein resides in the tight junction. In terms of biological role, plays a role in tight junction biogenesis and in the establishment of cell polarity in epithelial cells. Also involved in adherens junction biogenesis. Required for polarized epithelial organization, cell-cell adhesion and remodeling of myocardial cells during heart tube elongation during embryogenesis. Functions in cellular patterning of the retina and development of the retinal pigmented epithelium. Also required for embryo body axis specification. This is Protein PALS1 (pals1a) from Danio rerio (Zebrafish).